A 149-amino-acid polypeptide reads, in one-letter code: Nucleoside diphosphate kinase (149 aa).

Positions 9, 57, 85, 91, 102, and 112 each coordinate ATP. The active-site Pros-phosphohistidine intermediate is the His115.

The protein belongs to the NDK family. Mg(2+) serves as cofactor.

The protein localises to the cytoplasm. It catalyses the reaction a 2'-deoxyribonucleoside 5'-diphosphate + ATP = a 2'-deoxyribonucleoside 5'-triphosphate + ADP. The catalysed reaction is a ribonucleoside 5'-diphosphate + ATP = a ribonucleoside 5'-triphosphate + ADP. Functionally, major role in the synthesis of nucleoside triphosphates other than ATP. The ATP gamma phosphate is transferred to the NDP beta phosphate via a ping-pong mechanism, using a phosphorylated active-site intermediate. This chain is Nucleoside diphosphate kinase, found in Methanosarcina mazei (strain ATCC BAA-159 / DSM 3647 / Goe1 / Go1 / JCM 11833 / OCM 88) (Methanosarcina frisia).